The primary structure comprises 529 residues: Bifunctional purine biosynthesis protein PurH (529 aa).

Positions 1 to 148 constitute an MGS-like domain; the sequence is MQQRRSVRRA…KNHKDVAIVV (148 aa).

It belongs to the PurH family.

It catalyses the reaction (6R)-10-formyltetrahydrofolate + 5-amino-1-(5-phospho-beta-D-ribosyl)imidazole-4-carboxamide = 5-formamido-1-(5-phospho-D-ribosyl)imidazole-4-carboxamide + (6S)-5,6,7,8-tetrahydrofolate. The catalysed reaction is IMP + H2O = 5-formamido-1-(5-phospho-D-ribosyl)imidazole-4-carboxamide. The protein operates within purine metabolism; IMP biosynthesis via de novo pathway; 5-formamido-1-(5-phospho-D-ribosyl)imidazole-4-carboxamide from 5-amino-1-(5-phospho-D-ribosyl)imidazole-4-carboxamide (10-formyl THF route): step 1/1. It participates in purine metabolism; IMP biosynthesis via de novo pathway; IMP from 5-formamido-1-(5-phospho-D-ribosyl)imidazole-4-carboxamide: step 1/1. The polypeptide is Bifunctional purine biosynthesis protein PurH (Salmonella arizonae (strain ATCC BAA-731 / CDC346-86 / RSK2980)).